The chain runs to 64 residues: Putative neurotoxin-H (64 aa).

The N-terminal stretch at 1 to 19 (MYATVTVTVLLLISSGIFC) is a signal peptide. 3 disulfide bridges follow: C25/C45, C32/C54, and C36/C56.

As to expression, expressed by the venom gland.

It localises to the secreted. This Lychas mucronatus (Chinese swimming scorpion) protein is Putative neurotoxin-H.